Reading from the N-terminus, the 514-residue chain is Na(+)/H(+) antiporter NhaB (514 aa).

The next 12 helical transmembrane spans lie at 23-43, 63-83, 97-117, 120-140, 144-164, 202-222, 238-258, 303-323, 357-377, 391-411, 447-467, and 475-495; these read LALL…PFIA, PLLP…TSAA, LLLM…LFIF, LLLS…AAAF, FLDA…FYGI, LMMH…VGEP, FFLR…LTCM, AIIG…VGLI, LTVF…APII, LFYL…VGTI, ATPN…APLI, and VWMA…CVEF.

Belongs to the NhaB Na(+)/H(+) (TC 2.A.34) antiporter family.

Its subcellular location is the cell inner membrane. It catalyses the reaction 2 Na(+)(in) + 3 H(+)(out) = 2 Na(+)(out) + 3 H(+)(in). In terms of biological role, na(+)/H(+) antiporter that extrudes sodium in exchange for external protons. The protein is Na(+)/H(+) antiporter NhaB of Salmonella paratyphi B (strain ATCC BAA-1250 / SPB7).